A 147-amino-acid polypeptide reads, in one-letter code: Hemoglobin subunit deltaH (147 aa).

One can recognise a Globin domain in the interval 3 to 147 (RLTDSEKAEV…MANALAHKYH (145 aa)). Heme b-binding residues include His64 and His93.

The protein belongs to the globin family. Heterotetramer of two delta chains and two alpha chains. In terms of tissue distribution, red blood cells.

The sequence is that of Hemoglobin subunit deltaH from Procavia capensis (Rock hyrax).